The following is a 445-amino-acid chain: Phosphoglucosamine mutase (445 aa).

Ser101 serves as the catalytic Phosphoserine intermediate. Ser101, Asp240, Asp242, and Asp244 together coordinate Mg(2+). Residue Ser101 is modified to Phosphoserine.

Belongs to the phosphohexose mutase family. Mg(2+) serves as cofactor. In terms of processing, activated by phosphorylation.

The enzyme catalyses alpha-D-glucosamine 1-phosphate = D-glucosamine 6-phosphate. Its function is as follows. Catalyzes the conversion of glucosamine-6-phosphate to glucosamine-1-phosphate. This Pseudomonas paraeruginosa (strain DSM 24068 / PA7) (Pseudomonas aeruginosa (strain PA7)) protein is Phosphoglucosamine mutase.